The sequence spans 273 residues: E3 ubiquitin-protein ligase SDIR1 (273 aa).

The Cytoplasmic segment spans residues Met1 to Arg33. Residues Pro34–Asn54 traverse the membrane as a helical segment. The Lumenal portion of the chain corresponds to Ser55–His56. A helical membrane pass occupies residues Gln57 to Leu77. The Cytoplasmic segment spans residues Arg78–Val273. The RING-type; atypical zinc-finger motif lies at Cys211–Lys252.

As to quaternary structure, interacts with ATP1/SDIRIP1. Ubiquitous.

The protein resides in the endoplasmic reticulum membrane. The catalysed reaction is S-ubiquitinyl-[E2 ubiquitin-conjugating enzyme]-L-cysteine + [acceptor protein]-L-lysine = [E2 ubiquitin-conjugating enzyme]-L-cysteine + N(6)-ubiquitinyl-[acceptor protein]-L-lysine.. In terms of biological role, E3 ubiquitin-protein ligase that acts as a positive regulator of abscisic acid-related stress signal transduction. Interacts with and ubiquitinates ATP1/SDIRIP1 to modulate ATP1/SDIRIP1 stability through the 26S proteasome pathway. Regulates abscisic acid (ABA) and salt stress responses by negatively affecting ATP1/SDIRIP1 stability. The SDIR1-ATP1/SDIRIP1 complex plays an important role in ABA signaling through the ubiquitination pathway. In Arabidopsis thaliana (Mouse-ear cress), this protein is E3 ubiquitin-protein ligase SDIR1.